Consider the following 290-residue polypeptide: Light-independent protochlorophyllide reductase iron-sulfur ATP-binding protein (290 aa).

Residues 10–15 (GIGKST) and K39 contribute to the ATP site. S14 contributes to the Mg(2+) binding site. 2 residues coordinate [4Fe-4S] cluster: C95 and C129. 180–181 (NR) serves as a coordination point for ATP.

It belongs to the NifH/BchL/ChlL family. Homodimer. Protochlorophyllide reductase is composed of three subunits; ChlL, ChlN and ChlB. It depends on [4Fe-4S] cluster as a cofactor.

The protein localises to the plastid. The protein resides in the chloroplast. The catalysed reaction is chlorophyllide a + oxidized 2[4Fe-4S]-[ferredoxin] + 2 ADP + 2 phosphate = protochlorophyllide a + reduced 2[4Fe-4S]-[ferredoxin] + 2 ATP + 2 H2O. It participates in porphyrin-containing compound metabolism; chlorophyll biosynthesis (light-independent). Its function is as follows. Component of the dark-operative protochlorophyllide reductase (DPOR) that uses Mg-ATP and reduced ferredoxin to reduce ring D of protochlorophyllide (Pchlide) to form chlorophyllide a (Chlide). This reaction is light-independent. The L component serves as a unique electron donor to the NB-component of the complex, and binds Mg-ATP. The polypeptide is Light-independent protochlorophyllide reductase iron-sulfur ATP-binding protein (Cycas taitungensis (Prince sago)).